We begin with the raw amino-acid sequence, 154 residues long: Small ribosomal subunit protein uS13m (154 aa).

The N-terminal 30 residues, 1–30, are a transit peptide targeting the mitochondrion; it reads MLGLRRSATTLFDISQSLLRNVTFHGLRVQ. The segment at 121–154 is disordered; it reads RHGLPCRGQRTSTNARTKKGKAVAIAGKKKAPRK. The span at 136–154 shows a compositional bias: basic residues; it reads RTKKGKAVAIAGKKKAPRK.

This sequence belongs to the universal ribosomal protein uS13 family. As to quaternary structure, part of the small ribosomal subunit.

It localises to the mitochondrion. Located at the top of the head of the small subunit, it contacts several helices of the 18S rRNA. The sequence is that of Small ribosomal subunit protein uS13m (RPS13) from Arabidopsis thaliana (Mouse-ear cress).